The primary structure comprises 302 residues: uncharacterized protein (302 aa).

Transmembrane regions (helical) follow at residues 25–45 (SFIF…LQIF), 58–78 (FSYL…VIAL), 104–124 (IQVG…WMFL), 158–178 (YGLL…ATVL), 182–202 (FAWA…QYVP), 215–235 (ALSI…GYLL), and 247–267 (MMYI…MFYL). The PQ-loop domain maps to 175–245 (ATVLSSNFAW…SRLPGTNWTT (71 aa)).

It is found in the membrane. This is an uncharacterized protein from Schizosaccharomyces pombe (strain 972 / ATCC 24843) (Fission yeast).